We begin with the raw amino-acid sequence, 960 residues long: Isoleucine--tRNA ligase (960 aa).

The 'HIGH' region motif lies at proline 82–histidine 92. Position 606 (glutamate 606) interacts with L-isoleucyl-5'-AMP. Positions lysine 647–serine 651 match the 'KMSKS' region motif. Lysine 650 serves as a coordination point for ATP. Positions 931, 934, 951, and 954 each coordinate Zn(2+).

The protein belongs to the class-I aminoacyl-tRNA synthetase family. IleS type 1 subfamily. In terms of assembly, monomer. Requires Zn(2+) as cofactor.

The protein localises to the cytoplasm. It catalyses the reaction tRNA(Ile) + L-isoleucine + ATP = L-isoleucyl-tRNA(Ile) + AMP + diphosphate. Its function is as follows. Catalyzes the attachment of isoleucine to tRNA(Ile). As IleRS can inadvertently accommodate and process structurally similar amino acids such as valine, to avoid such errors it has two additional distinct tRNA(Ile)-dependent editing activities. One activity is designated as 'pretransfer' editing and involves the hydrolysis of activated Val-AMP. The other activity is designated 'posttransfer' editing and involves deacylation of mischarged Val-tRNA(Ile). The chain is Isoleucine--tRNA ligase from Gluconobacter oxydans (strain 621H) (Gluconobacter suboxydans).